Reading from the N-terminus, the 387-residue chain is Phosphoglycerate kinase (387 aa).

Substrate is bound by residues Asp-21–Asn-23, Arg-36, His-59–Arg-62, Arg-114, and Arg-147. ATP-binding positions include Lys-198, Glu-314, and Gly-340–Thr-343.

The protein belongs to the phosphoglycerate kinase family. As to quaternary structure, monomer.

The protein resides in the cytoplasm. The catalysed reaction is (2R)-3-phosphoglycerate + ATP = (2R)-3-phospho-glyceroyl phosphate + ADP. Its pathway is carbohydrate degradation; glycolysis; pyruvate from D-glyceraldehyde 3-phosphate: step 2/5. In Erwinia tasmaniensis (strain DSM 17950 / CFBP 7177 / CIP 109463 / NCPPB 4357 / Et1/99), this protein is Phosphoglycerate kinase.